The following is a 558-amino-acid chain: Cytochrome P450 monooxygenase sdnT (558 aa).

Residues I21–I41 form a helical membrane-spanning segment. Positions Q298–P317 are disordered. N464 and N495 each carry an N-linked (GlcNAc...) asparagine glycan. C505 contacts heme.

It belongs to the cytochrome P450 family. Heme serves as cofactor.

The protein resides in the membrane. It participates in antibiotic biosynthesis. Its function is as follows. Cytochrome P450 monooxygenase; part of the gene cluster that mediates the biosynthesis of sordarin and hypoxysordarin, glycoside antibiotics with a unique tetracyclic diterpene aglycone structure. First, the geranylgeranyl diphosphate synthase sdnC constructs GGDP from farnesyl diphosphate and isopentenyl diphosphate. The diterpene cyclase sdnA then catalyzes the cyclization of GGDP to afford cycloaraneosene. Cycloaraneosene is then hydroxylated four times by the putative cytochrome P450 monooxygenases sdnB, sdnE, sdnF and sdnH to give a hydroxylated cycloaraneosene derivative such as cycloaraneosene-8,9,13,19-tetraol. Although the order of the hydroxylations is unclear, at least C8, C9 and C13 of the cycloaraneosene skeleton are hydroxylated before the sordaricin formation. Dehydration of the 13-hydroxy group of the hydroxylated cycloaraneosene derivative might be catalyzed by an unassigned hypothetical protein such as sdnG and sdnP to construct the cyclopentadiene moiety. The FAD-dependent oxidoreductase sdnN is proposed to catalyze the oxidation at C9 of the hydroxylated cycloaraneosene derivative and also catalyze the Baeyer-Villiger oxidation to give the lactone intermediate. The presumed lactone intermediate would be hydrolyzed to give an acrolein moiety and a carboxylate moiety. Then, [4+2]cycloaddition would occur between the acrolein moiety and the cyclopentadiene moiety to give sordaricin. SdnN might also be involved in the [4+2]cycloaddition after the hypothesized oxidation to accommodate the oxidized product and prompt the [4+2]cycloaddition. GDP-6-deoxy-D-altrose may be biosynthesized from GDP-D-mannose by the putative GDP-mannose-4,6-dehydratase sdnI and the short-chain dehydrogenase sdnK. The glycosyltransferase sdnJ catalyzes the attachment of 6-deoxy-D-altrose onto the 19-hydroxy group of sordaricin to give 4'-O-demethylsordarin. The methyltransferase sdnD would complete the biosynthesis of sordarin. Sordarin can be further modified into hypoxysordarin. The unique acyl chain at the 3'-hydroxy group of hypoxysordarin would be constructed by an iterative type I PKS sdnO and the trans-acting polyketide methyltransferase sdnL. SdnL would be responsible for the introduction of an alpha-methyl group of the polyketide chain. Alternatively, the beta-lactamase-like protein sdnR might be responsible for the cleavage and transfer of the polyketide chain from the PKS sdnO to sordarin. Two putative cytochrome P450 monooxygenases, sdnQ and sdnT, might catalyze the epoxidations of the polyketide chain to complete the biosynthesis of hypoxysordarin. Transcriptional regulators sdnM and sdnS are presumably encoded for the transcriptional regulation of the expression of the sdn gene cluster. This Sordaria araneosa (Pleurage araneosa) protein is Cytochrome P450 monooxygenase sdnT.